Reading from the N-terminus, the 366-residue chain is Holliday junction branch migration complex subunit RuvB (366 aa).

The disordered stretch occupies residues Met-1–Arg-50. The large ATPase domain (RuvB-L) stretch occupies residues Pro-13–Tyr-210. Positions Gly-15–Ala-24 are enriched in basic and acidic residues. ATP-binding positions include Ile-49, Arg-50, Gly-91, Lys-94, Thr-95, Thr-96, Glu-157 to Tyr-159, Arg-200, Tyr-210, and Arg-247. A Mg(2+)-binding site is contributed by Thr-95. The small ATPAse domain (RuvB-S) stretch occupies residues Glu-211 to Gln-281. Positions Pro-284–Leu-366 are head domain (RuvB-H). 2 residues coordinate DNA: Arg-339 and Arg-344.

Belongs to the RuvB family. As to quaternary structure, homohexamer. Forms an RuvA(8)-RuvB(12)-Holliday junction (HJ) complex. HJ DNA is sandwiched between 2 RuvA tetramers; dsDNA enters through RuvA and exits via RuvB. An RuvB hexamer assembles on each DNA strand where it exits the tetramer. Each RuvB hexamer is contacted by two RuvA subunits (via domain III) on 2 adjacent RuvB subunits; this complex drives branch migration. In the full resolvosome a probable DNA-RuvA(4)-RuvB(12)-RuvC(2) complex forms which resolves the HJ.

Its subcellular location is the cytoplasm. It carries out the reaction ATP + H2O = ADP + phosphate + H(+). The RuvA-RuvB-RuvC complex processes Holliday junction (HJ) DNA during genetic recombination and DNA repair, while the RuvA-RuvB complex plays an important role in the rescue of blocked DNA replication forks via replication fork reversal (RFR). RuvA specifically binds to HJ cruciform DNA, conferring on it an open structure. The RuvB hexamer acts as an ATP-dependent pump, pulling dsDNA into and through the RuvAB complex. RuvB forms 2 homohexamers on either side of HJ DNA bound by 1 or 2 RuvA tetramers; 4 subunits per hexamer contact DNA at a time. Coordinated motions by a converter formed by DNA-disengaged RuvB subunits stimulates ATP hydrolysis and nucleotide exchange. Immobilization of the converter enables RuvB to convert the ATP-contained energy into a lever motion, pulling 2 nucleotides of DNA out of the RuvA tetramer per ATP hydrolyzed, thus driving DNA branch migration. The RuvB motors rotate together with the DNA substrate, which together with the progressing nucleotide cycle form the mechanistic basis for DNA recombination by continuous HJ branch migration. Branch migration allows RuvC to scan DNA until it finds its consensus sequence, where it cleaves and resolves cruciform DNA. The protein is Holliday junction branch migration complex subunit RuvB of Nostoc punctiforme (strain ATCC 29133 / PCC 73102).